The sequence spans 426 residues: Glutamate-1-semialdehyde 2,1-aminomutase (426 aa).

An N6-(pyridoxal phosphate)lysine modification is found at Lys265.

This sequence belongs to the class-III pyridoxal-phosphate-dependent aminotransferase family. HemL subfamily. In terms of assembly, homodimer. Pyridoxal 5'-phosphate serves as cofactor.

It is found in the cytoplasm. The enzyme catalyses (S)-4-amino-5-oxopentanoate = 5-aminolevulinate. The protein operates within porphyrin-containing compound metabolism; protoporphyrin-IX biosynthesis; 5-aminolevulinate from L-glutamyl-tRNA(Glu): step 2/2. The polypeptide is Glutamate-1-semialdehyde 2,1-aminomutase (Escherichia coli O81 (strain ED1a)).